A 262-amino-acid polypeptide reads, in one-letter code: uncharacterized protein (262 aa).

Residues 1 to 22 (MGYLKRFALYISVMILIFAIAG) form the signal peptide. A lipid anchor (N-palmitoyl cysteine) is attached at C23. A lipid anchor (S-diacylglycerol cysteine) is attached at C23.

This sequence belongs to the staphylococcal tandem lipoprotein family.

The protein resides in the cell membrane. This is an uncharacterized protein from Staphylococcus aureus (strain NCTC 8325 / PS 47).